Here is a 612-residue protein sequence, read N- to C-terminus: Elongation factor 4 (612 aa).

A tr-type G domain is found at 12–194 (SRIRNFSIIA…QIVEKVPAPS (183 aa)). GTP contacts are provided by residues 24-29 (DHGKST) and 141-144 (NKID).

It belongs to the TRAFAC class translation factor GTPase superfamily. Classic translation factor GTPase family. LepA subfamily.

Its subcellular location is the cell membrane. The catalysed reaction is GTP + H2O = GDP + phosphate + H(+). In terms of biological role, required for accurate and efficient protein synthesis under certain stress conditions. May act as a fidelity factor of the translation reaction, by catalyzing a one-codon backward translocation of tRNAs on improperly translocated ribosomes. Back-translocation proceeds from a post-translocation (POST) complex to a pre-translocation (PRE) complex, thus giving elongation factor G a second chance to translocate the tRNAs correctly. Binds to ribosomes in a GTP-dependent manner. The sequence is that of Elongation factor 4 from Bacillus licheniformis (strain ATCC 14580 / DSM 13 / JCM 2505 / CCUG 7422 / NBRC 12200 / NCIMB 9375 / NCTC 10341 / NRRL NRS-1264 / Gibson 46).